We begin with the raw amino-acid sequence, 288 residues long: tRNA dimethylallyltransferase (288 aa).

17 to 24 provides a ligand contact to ATP; the sequence is GPTASGKS. 19–24 serves as a coordination point for substrate; that stretch reads TASGKS.

Belongs to the IPP transferase family. In terms of assembly, monomer. Mg(2+) is required as a cofactor.

The enzyme catalyses adenosine(37) in tRNA + dimethylallyl diphosphate = N(6)-dimethylallyladenosine(37) in tRNA + diphosphate. In terms of biological role, catalyzes the transfer of a dimethylallyl group onto the adenine at position 37 in tRNAs that read codons beginning with uridine, leading to the formation of N6-(dimethylallyl)adenosine (i(6)A). This is tRNA dimethylallyltransferase from Ruegeria sp. (strain TM1040) (Silicibacter sp.).